A 275-amino-acid polypeptide reads, in one-letter code: Methylglyoxal reductase DkgA (275 aa).

Residue Y51 is the Proton donor of the active site. H107 lines the substrate pocket. Residue 187-241 (SPLAQGGKGVFDQKVIRDLADKYGKTPAQIVIRWHLDSGLVVIPKSVTPSRIAEN) participates in NADP(+) binding.

Belongs to the aldo/keto reductase family. In terms of assembly, monomer.

The protein localises to the cytoplasm. The catalysed reaction is hydroxyacetone + NADP(+) = methylglyoxal + NADPH + H(+). In terms of biological role, aldo-keto reductase that significantly contributes to cellular methylglyoxal detoxification by catalyzing the NADPH-dependent conversion of methylglyoxal to acetol. In Escherichia coli O157:H7, this protein is Methylglyoxal reductase DkgA.